The following is a 157-amino-acid chain: Transcription elongation factor GreA (157 aa).

It belongs to the GreA/GreB family.

In terms of biological role, necessary for efficient RNA polymerase transcription elongation past template-encoded arresting sites. The arresting sites in DNA have the property of trapping a certain fraction of elongating RNA polymerases that pass through, resulting in locked ternary complexes. Cleavage of the nascent transcript by cleavage factors such as GreA or GreB allows the resumption of elongation from the new 3'terminus. GreA releases sequences of 2 to 3 nucleotides. This Maricaulis maris (strain MCS10) (Caulobacter maris) protein is Transcription elongation factor GreA.